Consider the following 478-residue polypeptide: Cytochrome c-552 (478 aa).

The N-terminal stretch at 1–26 (MARKTLRARRFFSLIFPFFFITSVYA) is a signal peptide. A heme c-binding site is contributed by His-94. Residues Cys-122, Cys-125, and Lys-126 each contribute to the heme site. Residues Cys-160, Cys-163, His-164, Cys-209, Cys-212, and His-213 each contribute to the heme c site. Ca(2+) contacts are provided by Glu-215, Tyr-216, Lys-261, and Gln-263. Tyr-216 is a substrate binding site. His-264 provides a ligand contact to substrate. The heme c site is built by His-275, Cys-282, Cys-285, His-286, His-301, Cys-314, Cys-317, His-318, and His-393.

The protein belongs to the cytochrome c-552 family. Requires Ca(2+) as cofactor. Heme c is required as a cofactor.

It is found in the periplasm. It carries out the reaction 6 Fe(III)-[cytochrome c] + NH4(+) + 2 H2O = 6 Fe(II)-[cytochrome c] + nitrite + 8 H(+). It participates in nitrogen metabolism; nitrate reduction (assimilation). Functionally, catalyzes the reduction of nitrite to ammonia, consuming six electrons in the process. This Salmonella typhi protein is Cytochrome c-552.